Here is a 1179-residue protein sequence, read N- to C-terminus: Dynein axonemal assembly factor 9 (1179 aa).

Interacts with ARL3.

In terms of biological role, may act as an effector for ARL3. This is Dynein axonemal assembly factor 9 from Mus musculus (Mouse).